The primary structure comprises 261 residues: MASSKERESLVYIARLAEQAERYDEMVDAMKNVANLDVELTVEERNLLSVGYKNVVGSRRASWRILSSIEQKEDARGNEQNVKRIQGYRQKVESELTDICNNIMTVIDEHLIPSCTAGESTVFYYKMKGDYYRYLAEFKTGDDKKEVSDLSLKAYQTATTTAEAELPITHPIRLGLALNFSVFYYEIMNSPERACQLAKQVFDEAISELDSLNEDNYKDGTLILQLLRDNLTLWTSDIPEDGEEAPKGDAANKVGAGEDAE.

The disordered stretch occupies residues 237-261; it reads DIPEDGEEAPKGDAANKVGAGEDAE.

Belongs to the 14-3-3 family. As to quaternary structure, homodimer.

The chain is 14-3-3 protein 8 (TFT8) from Solanum lycopersicum (Tomato).